The sequence spans 343 residues: Holliday junction branch migration complex subunit RuvB (343 aa).

The large ATPase domain (RuvB-L) stretch occupies residues 1–186 (MTEEFDIRQE…FGINLHLEYY (186 aa)). ATP is bound by residues L25, R26, G67, K70, T71, T72, 133-135 (EDY), R176, Y186, and R223. Residue T71 participates in Mg(2+) binding. The tract at residues 187 to 257 (DVHTITGIVE…IACYALEALN (71 aa)) is small ATPAse domain (RuvB-S). A head domain (RuvB-H) region spans residues 260–343 (RYGLDNVDHK…PRPHRPSLFD (84 aa)). DNA contacts are provided by R315 and R320.

This sequence belongs to the RuvB family. Homohexamer. Forms an RuvA(8)-RuvB(12)-Holliday junction (HJ) complex. HJ DNA is sandwiched between 2 RuvA tetramers; dsDNA enters through RuvA and exits via RuvB. An RuvB hexamer assembles on each DNA strand where it exits the tetramer. Each RuvB hexamer is contacted by two RuvA subunits (via domain III) on 2 adjacent RuvB subunits; this complex drives branch migration. In the full resolvosome a probable DNA-RuvA(4)-RuvB(12)-RuvC(2) complex forms which resolves the HJ.

Its subcellular location is the cytoplasm. It catalyses the reaction ATP + H2O = ADP + phosphate + H(+). In terms of biological role, the RuvA-RuvB-RuvC complex processes Holliday junction (HJ) DNA during genetic recombination and DNA repair, while the RuvA-RuvB complex plays an important role in the rescue of blocked DNA replication forks via replication fork reversal (RFR). RuvA specifically binds to HJ cruciform DNA, conferring on it an open structure. The RuvB hexamer acts as an ATP-dependent pump, pulling dsDNA into and through the RuvAB complex. RuvB forms 2 homohexamers on either side of HJ DNA bound by 1 or 2 RuvA tetramers; 4 subunits per hexamer contact DNA at a time. Coordinated motions by a converter formed by DNA-disengaged RuvB subunits stimulates ATP hydrolysis and nucleotide exchange. Immobilization of the converter enables RuvB to convert the ATP-contained energy into a lever motion, pulling 2 nucleotides of DNA out of the RuvA tetramer per ATP hydrolyzed, thus driving DNA branch migration. The RuvB motors rotate together with the DNA substrate, which together with the progressing nucleotide cycle form the mechanistic basis for DNA recombination by continuous HJ branch migration. Branch migration allows RuvC to scan DNA until it finds its consensus sequence, where it cleaves and resolves cruciform DNA. This is Holliday junction branch migration complex subunit RuvB from Porphyromonas gingivalis (strain ATCC BAA-308 / W83).